The following is a 392-amino-acid chain: 5-azacytidine-induced protein 2 (392 aa).

Residues 1-197 are homodimerization; sequence MDALVEDDIC…IELQKAKQTD (197 aa). 3 coiled-coil regions span residues 40–76, 102–135, and 166–196; these read ALVTAYEDIKKRLKDSEKENSLLKKRIRFLEEKLIAR, DRDNLKSKLDKMNKDNSESLKVLNEQLQSKEVEL, and DLKIHGLEQELELMRKECSDLKIELQKAKQT. The interval 216–257 is interaction with TBK1 and IKBKE; it reads SDNMQHAYWELKREMSNLHLVTQVQAELLRKLKTSTAIKKAC. Residues serine 318 and serine 353 each carry the phosphoserine modification. The interval 345–365 is disordered; that stretch reads EDNSWVFPSPPKSSETAFGET.

As to quaternary structure, homodimer. Interacts with IKBKE, TBK1 and TICAM1. Interacts with TAX1BP1. Interacts with CALCOCO2. In terms of processing, ubiquitinated via 'Lys-48'-linked polyubiquitination by TRIM38, leading to its degradation.

It is found in the cytoplasm. Adapter protein which binds TBK1 and IKBKE playing a role in antiviral innate immunity. Activates serine/threonine-protein kinase TBK1 and facilitates its oligomerization. Enhances the phosphorylation of NF-kappa-B p65 subunit RELA by TBK1. Promotes TBK1-induced as well as TNF-alpha or PMA-induced activation of NF-kappa-B. Participates in IFNB promoter activation via TICAM1. The polypeptide is 5-azacytidine-induced protein 2 (AZI2) (Pongo abelii (Sumatran orangutan)).